The chain runs to 603 residues: Rab proteins geranylgeranyltransferase component A (603 aa).

Ser-470 bears the Phosphoserine mark.

Belongs to the Rab GDI family.

In terms of biological role, substrate-binding subunit (component A) of the Rab geranylgeranyltransferase (GGTase) complex. Binds unprenylated Rab proteins and presents the substrate peptide to the catalytic component B. The component A is thought to be regenerated by transferring its prenylated Rab back to the donor membrane. The sequence is that of Rab proteins geranylgeranyltransferase component A (MRS6) from Saccharomyces cerevisiae (strain ATCC 204508 / S288c) (Baker's yeast).